Here is a 502-residue protein sequence, read N- to C-terminus: Uric acid degradation bifunctional protein (502 aa).

The segment at 1 to 178 (MMRLKQLNEM…NSMTKHKERV (178 aa)) is OHCU decarboxylase. The active-site Proton donor; for OHCU decarboxylase activity is the histidine 68. Residues proline 69, 81–85 (SQEEQ), and 116–120 (FVMAV) each bind 5-hydroxy-2-oxo-4-ureido-2,5-dihydro-1H-imidazole-5-carboxylate. The segment at 179–502 (MYYGKGDVFA…DEPDHKGALK (324 aa)) is urate oxidase. Lysine 183 functions as the Charge relay system; for urate oxidase activity in the catalytic mechanism. Lysine 194 acts as the Charge relay system in catalysis. The active-site Charge relay system; for urate oxidase activity is threonine 243. Threonine 243, aspartate 244, phenylalanine 354, arginine 371, isoleucine 419, glutamine 420, and asparagine 446 together coordinate urate.

The protein in the N-terminal section; belongs to the OHCU decarboxylase family. This sequence in the C-terminal section; belongs to the uricase family.

It catalyses the reaction 5-hydroxy-2-oxo-4-ureido-2,5-dihydro-1H-imidazole-5-carboxylate + H(+) = (S)-allantoin + CO2. The catalysed reaction is urate + O2 + H2O = 5-hydroxyisourate + H2O2. The protein operates within purine metabolism; urate degradation; (S)-allantoin from urate: step 1/3. It functions in the pathway purine metabolism; urate degradation; (S)-allantoin from urate: step 3/3. In terms of biological role, catalyzes two steps in the degradation of uric acid, i.e. the oxidation of uric acid to 5-hydroxyisourate (HIU) and the stereoselective decarboxylation of 2-oxo-4-hydroxy-4-carboxy-5-ureidoimidazoline (OHCU) to (S)-allantoin. This chain is Uric acid degradation bifunctional protein (uao), found in Bacillus sp. (strain TB-90).